The sequence spans 143 residues: Class I hydrophobin 20 (143 aa).

The signal sequence occupies residues 1-22 (MLSHPMKLLFFVFALSALLAAA). 4 cysteine pairs are disulfide-bonded: Cys54-Cys123, Cys62-Cys117, Cys63-Cys102, and Cys124-Cys137.

This sequence belongs to the fungal hydrophobin family. In terms of assembly, self-assembles to form functional amyloid fibrils called rodlets. Self-assembly into fibrillar rodlets occurs spontaneously at hydrophobic:hydrophilic interfaces and the rodlets further associate laterally to form amphipathic monolayers.

It localises to the secreted. The protein resides in the cell wall. In terms of biological role, aerial growth, conidiation, and dispersal of filamentous fungi in the environment rely upon a capability of their secreting small amphipathic proteins called hydrophobins (HPBs) with low sequence identity. Class I can self-assemble into an outermost layer of rodlet bundles on aerial cell surfaces, conferring cellular hydrophobicity that supports fungal growth, development and dispersal; whereas Class II form highly ordered films at water-air interfaces through intermolecular interactions but contribute nothing to the rodlet structure. Hydph20 is a class I hydrophobin involved in mycelial growth. In Pleurotus ostreatus (strain PC15) (Oyster mushroom), this protein is Class I hydrophobin 20.